A 304-amino-acid polypeptide reads, in one-letter code: Acetyl-coenzyme A carboxylase carboxyl transferase subunit beta (304 aa).

In terms of domain architecture, CoA carboxyltransferase N-terminal spans 23–292; the sequence is VWTKCDSCGQ…PNPEAPREGV (270 aa). The Zn(2+) site is built by Cys27, Cys30, Cys46, and Cys49. A C4-type zinc finger spans residues 27–49; that stretch reads CDSCGQVLYRAELERNLEVCPKC. The tract at residues 284-304 is disordered; it reads NPEAPREGVVVPPVPDQEPEA. The span at 295–304 shows a compositional bias: pro residues; the sequence is PPVPDQEPEA.

It belongs to the AccD/PCCB family. As to quaternary structure, acetyl-CoA carboxylase is a heterohexamer composed of biotin carboxyl carrier protein (AccB), biotin carboxylase (AccC) and two subunits each of ACCase subunit alpha (AccA) and ACCase subunit beta (AccD). It depends on Zn(2+) as a cofactor.

The protein localises to the cytoplasm. It catalyses the reaction N(6)-carboxybiotinyl-L-lysyl-[protein] + acetyl-CoA = N(6)-biotinyl-L-lysyl-[protein] + malonyl-CoA. It participates in lipid metabolism; malonyl-CoA biosynthesis; malonyl-CoA from acetyl-CoA: step 1/1. Functionally, component of the acetyl coenzyme A carboxylase (ACC) complex. Biotin carboxylase (BC) catalyzes the carboxylation of biotin on its carrier protein (BCCP) and then the CO(2) group is transferred by the transcarboxylase to acetyl-CoA to form malonyl-CoA. The chain is Acetyl-coenzyme A carboxylase carboxyl transferase subunit beta from Shigella boydii serotype 18 (strain CDC 3083-94 / BS512).